Reading from the N-terminus, the 181-residue chain is Oligoribonuclease (181 aa).

Residues 8-171 (LIWIDLEMTG…DDIRESIAEL (164 aa)) enclose the Exonuclease domain. Tyrosine 129 is an active-site residue.

It belongs to the oligoribonuclease family.

Its subcellular location is the cytoplasm. In terms of biological role, 3'-to-5' exoribonuclease specific for small oligoribonucleotides. This chain is Oligoribonuclease, found in Alcanivorax borkumensis (strain ATCC 700651 / DSM 11573 / NCIMB 13689 / SK2).